The chain runs to 365 residues: Isopentenyl-diphosphate delta-isomerase (365 aa).

8-9 (RK) lines the substrate pocket. FMN is bound by residues 67-69 (SIT), serine 97, and asparagine 126. 97–99 (SQR) is a binding site for substrate. Residue glutamine 160 coordinates substrate. Glutamate 161 lines the Mg(2+) pocket. FMN-binding positions include lysine 192, threonine 222, 272–274 (GVR), and 293–294 (AL).

This sequence belongs to the IPP isomerase type 2 family. In terms of assembly, homooctamer. Dimer of tetramers. Requires FMN as cofactor. The cofactor is NADPH. Mg(2+) serves as cofactor.

The protein resides in the cytoplasm. It carries out the reaction isopentenyl diphosphate = dimethylallyl diphosphate. Involved in the biosynthesis of isoprenoids. Catalyzes the 1,3-allylic rearrangement of the homoallylic substrate isopentenyl (IPP) to its allylic isomer, dimethylallyl diphosphate (DMAPP). In Methanosarcina acetivorans (strain ATCC 35395 / DSM 2834 / JCM 12185 / C2A), this protein is Isopentenyl-diphosphate delta-isomerase.